A 313-amino-acid chain; its full sequence is Aspartate carbamoyltransferase catalytic subunit (313 aa).

Carbamoyl phosphate-binding residues include arginine 58 and threonine 59. Position 86 (lysine 86) interacts with L-aspartate. Arginine 108, histidine 136, and glutamine 139 together coordinate carbamoyl phosphate. L-aspartate-binding residues include arginine 169 and arginine 223. 2 residues coordinate carbamoyl phosphate: glycine 264 and proline 265.

This sequence belongs to the aspartate/ornithine carbamoyltransferase superfamily. ATCase family. Heterododecamer (2C3:3R2) of six catalytic PyrB chains organized as two trimers (C3), and six regulatory PyrI chains organized as three dimers (R2).

It carries out the reaction carbamoyl phosphate + L-aspartate = N-carbamoyl-L-aspartate + phosphate + H(+). Its pathway is pyrimidine metabolism; UMP biosynthesis via de novo pathway; (S)-dihydroorotate from bicarbonate: step 2/3. Catalyzes the condensation of carbamoyl phosphate and aspartate to form carbamoyl aspartate and inorganic phosphate, the committed step in the de novo pyrimidine nucleotide biosynthesis pathway. In Chlorobium luteolum (strain DSM 273 / BCRC 81028 / 2530) (Pelodictyon luteolum), this protein is Aspartate carbamoyltransferase catalytic subunit.